Reading from the N-terminus, the 310-residue chain is ER-derived vesicles protein ERV29 (310 aa).

The Cytoplasmic portion of the chain corresponds to methionine 1–tyrosine 108. The tract at residues glycine 11–asparagine 31 is disordered. A helical transmembrane segment spans residues phenylalanine 109–leucine 129. Over valine 130–tyrosine 137 the chain is Lumenal. The chain crosses the membrane as a helical span at residues alanine 138 to glycine 158. Residues serine 159–arginine 209 are Cytoplasmic-facing. The chain crosses the membrane as a helical span at residues isoleucine 210–leucine 230. Residues threonine 231–lysine 245 lie on the Lumenal side of the membrane. A helical transmembrane segment spans residues phenylalanine 246 to tryptophan 266. Residues phenylalanine 267–tyrosine 310 are Cytoplasmic-facing. The Di-lysine motif signature appears at lysine 307–tyrosine 310.

It belongs to the SURF4 family.

The protein localises to the endoplasmic reticulum membrane. Its function is as follows. Constituent of COPII-coated endoplasmic reticulum-derived transport vesicles. Required for efficient transport of a subset of secretory proteins to the Golgi. The C-terminal di-lysine motif is required for exit from the endoplasmic reticulum. Required directly for packaging glycosylated pro-alpha-factor into COPII vesicles. Facilitates retrograde transport from the Golgi to the endoplasmic reticulum. This chain is ER-derived vesicles protein ERV29 (ERV29), found in Saccharomyces cerevisiae (strain ATCC 204508 / S288c) (Baker's yeast).